Here is a 202-residue protein sequence, read N- to C-terminus: dITP/XTP pyrophosphatase (202 aa).

10-15 is a substrate binding site; that stretch reads TGNAGK. 2 residues coordinate Mg(2+): aspartate 46 and aspartate 75. The active-site Proton acceptor is aspartate 75. Substrate is bound by residues serine 76, 160 to 163, lysine 183, and 188 to 189; these read FGYD and HR.

The protein belongs to the HAM1 NTPase family. Homodimer. It depends on Mg(2+) as a cofactor.

The enzyme catalyses XTP + H2O = XMP + diphosphate + H(+). It catalyses the reaction dITP + H2O = dIMP + diphosphate + H(+). The catalysed reaction is ITP + H2O = IMP + diphosphate + H(+). In terms of biological role, pyrophosphatase that catalyzes the hydrolysis of nucleoside triphosphates to their monophosphate derivatives, with a high preference for the non-canonical purine nucleotides XTP (xanthosine triphosphate), dITP (deoxyinosine triphosphate) and ITP. Seems to function as a house-cleaning enzyme that removes non-canonical purine nucleotides from the nucleotide pool, thus preventing their incorporation into DNA/RNA and avoiding chromosomal lesions. This chain is dITP/XTP pyrophosphatase, found in Idiomarina loihiensis (strain ATCC BAA-735 / DSM 15497 / L2-TR).